The following is a 489-amino-acid chain: uncharacterized protein (489 aa).

Disordered regions lie at residues 1–94, 109–229, 300–389, and 428–461; these read MIEE…GSLD, NRNQ…SDDD, DDNI…TSIQ, and SESG…TLVK. Low complexity-rich tracts occupy residues 43 to 53 and 64 to 77; these read LLVQQSNQSVK and SNGF…NIHD. Acidic residues predominate over residues 121–138; that stretch reads NFSEDDEDDDAEDDDSSD. A compositionally biased stretch (basic residues) spans 144 to 154; sequence KKNKPKKPSKL. Basic and acidic residues predominate over residues 155–164; the sequence is MKHDSVDGKN. Basic residues predominate over residues 173–199; that stretch reads SKKKVQHQLKEKNKKKGIKNDKKKSKP. Residues 308–343 are compositionally biased toward acidic residues; that stretch reads NDNDNDNDDDNDNDNDNDNDNDNDNDDDENGEDNGE. 2 stretches are compositionally biased toward low complexity: residues 344–389 and 433–449; these read DLNI…TSIQ and SISS…SSKS.

This is an uncharacterized protein from Dictyostelium discoideum (Social amoeba).